Here is a 287-residue protein sequence, read N- to C-terminus: Pyridoxal kinase PdxY (287 aa).

Substrate contacts are provided by residues serine 10 and 45–46 (TQ). ATP is bound by residues aspartate 112, alanine 144, glutamate 149, lysine 182, and 209-212 (RPLV). A substrate-binding site is contributed by aspartate 224.

This sequence belongs to the pyridoxine kinase family. PdxY subfamily. In terms of assembly, homodimer. Mg(2+) is required as a cofactor.

The enzyme catalyses pyridoxal + ATP = pyridoxal 5'-phosphate + ADP + H(+). Its pathway is cofactor metabolism; pyridoxal 5'-phosphate salvage; pyridoxal 5'-phosphate from pyridoxal: step 1/1. In terms of biological role, pyridoxal kinase involved in the salvage pathway of pyridoxal 5'-phosphate (PLP). Catalyzes the phosphorylation of pyridoxal to PLP. This is Pyridoxal kinase PdxY from Escherichia coli O6:H1 (strain CFT073 / ATCC 700928 / UPEC).